Consider the following 67-residue polypeptide: Large ribosomal subunit protein bL35 (67 aa).

This sequence belongs to the bacterial ribosomal protein bL35 family.

This Bartonella quintana (strain Toulouse) (Rochalimaea quintana) protein is Large ribosomal subunit protein bL35.